A 69-amino-acid chain; its full sequence is Large ribosomal subunit protein bL31 (69 aa).

Positions 17, 19, 37, and 40 each coordinate Zn(2+).

This sequence belongs to the bacterial ribosomal protein bL31 family. Type A subfamily. As to quaternary structure, part of the 50S ribosomal subunit. Zn(2+) is required as a cofactor.

In terms of biological role, binds the 23S rRNA. The polypeptide is Large ribosomal subunit protein bL31 (Caldicellulosiruptor bescii (strain ATCC BAA-1888 / DSM 6725 / KCTC 15123 / Z-1320) (Anaerocellum thermophilum)).